Reading from the N-terminus, the 321-residue chain is Mas-related G-protein coupled receptor member H (321 aa).

Topologically, residues 1 to 35 (MEPLAMTLYPLESTQPTRNKTPNETTWSSEHTDDH) are extracellular. A glycan (N-linked (GlcNAc...) asparagine) is linked at Asn23. A helical transmembrane segment spans residues 36-56 (TYFLVSLVICSLGLAGNGLLI). Over 57–71 (WFLIFCIKRKPFTIY) the chain is Cytoplasmic. Residues 72–92 (ILHLAIADFMVLLCSSIMKLV) traverse the membrane as a helical segment. The Extracellular segment spans residues 93–102 (NTFHIYNMTL). N-linked (GlcNAc...) asparagine glycosylation occurs at Asn99. A helical transmembrane segment spans residues 103-126 (ESYAILFMIFGYNTGLHLLTAISV). Over 127-147 (ERCLSVLYPIWYQCQRPKHQS) the chain is Cytoplasmic. Residues 148–168 (AVACMLLWALSVLVSGLENFF) traverse the membrane as a helical segment. Over 169–188 (CILEVKPQFPECRYVYIFSC) the chain is Extracellular. A helical transmembrane segment spans residues 189 to 209 (ILTFLVFVPLMIFSNLILFIQ). The Cytoplasmic segment spans residues 210-225 (VCCNLKPRQPTKLYVI). Residues 226–246 (IMTTVILFLVFAMPMKVLLII) traverse the membrane as a helical segment. Gly247 is a topological domain (extracellular). The helical transmembrane segment at 248-271 (YYSSSLDDSVWDSLPYLNMLSTIN) threads the bilayer. Residues 272-320 (CSINPIVYFVVGSLRRKRSRKSLKEALQKVFEEKPVVASRENVTQFSLP) lie on the Cytoplasmic side of the membrane.

Belongs to the G-protein coupled receptor 1 family. Mas subfamily.

Its subcellular location is the cell membrane. Orphan receptor. May regulate nociceptor function and/or development, including the sensation or modulation of pain. This chain is Mas-related G-protein coupled receptor member H (Mrgprh), found in Mus musculus (Mouse).